Reading from the N-terminus, the 197-residue chain is MKFAVFASLLASAAAFAPAQQSARTSVATNMAFESELGAQPPLGFFDPLGLVADGDQEKFDRLRYVELKHGRISMLAVVGYLVQENGIRLPGDIDYSGTSFASIPNGFAALSTISTAGIAQIVAFIGFLEIAVMKDITGGEFPGDFRNDYIDFGWDSFDEETQFKKRAIELNQGRAAQMGILALMVHEKLGVSLIPN.

The transit peptide at methionine 1–methionine 31 directs the protein to the chloroplast. The next 3 membrane-spanning stretches (helical) occupy residues isoleucine 73–isoleucine 94, isoleucine 114–methionine 134, and glycine 174–proline 196.

This sequence belongs to the fucoxanthin chlorophyll protein family. As to quaternary structure, the LHC complex of chromophytic algae is composed of fucoxanthin, chlorophyll A and C bound non-covalently by fucoxanthin chlorophyll proteins (FCPs). The ratio of the pigments in lhc; fucoxanthin: chlorophyll C: chlorophyll A is (0.6-1): (0.1-0.3): (1).

Its subcellular location is the plastid. The protein resides in the chloroplast thylakoid membrane. Functionally, the light-harvesting complex (LHC) functions as a light receptor, it captures and delivers excitation energy to photosystems with which it is closely associated. In chromophytic algae, LHC is associated with photosystem II, energy being transferred from fucoxanthin and chlorophyll C to chlorophyll A and the photosynthetic reaction centers where it is used to synthesize ATP and reducing power. This is Fucoxanthin-chlorophyll a-c binding protein F, chloroplastic (FCPF) from Phaeodactylum tricornutum (Diatom).